The primary structure comprises 456 residues: Protein odr-4 homolog (456 aa).

Residues 374 to 401 show a composition bias toward low complexity; that stretch reads IESSKNNNNNNNNNNNNNNNNNNNNSKL. A disordered region spans residues 374–403; sequence IESSKNNNNNNNNNNNNNNNNNNNNSKLSN. The helical transmembrane segment at 436-456 threads the bilayer; it reads YLIIIISVLVLMVAFYFKFFV.

The protein belongs to the ODR-4 family.

The protein resides in the membrane. Functionally, may play a role in the trafficking of a subset of G-protein coupled receptors. This Dictyostelium discoideum (Social amoeba) protein is Protein odr-4 homolog.